Here is a 110-residue protein sequence, read N- to C-terminus: UPF0060 membrane protein Mmwyl1_1139 (110 aa).

A run of 4 helical transmembrane segments spans residues 7–27 (ISLF…PYLW), 33–53 (TIWL…LLTL), 63–83 (AAYG…VDGI), and 87–107 (TWDM…MFAP).

The protein belongs to the UPF0060 family.

It is found in the cell inner membrane. This chain is UPF0060 membrane protein Mmwyl1_1139, found in Marinomonas sp. (strain MWYL1).